The sequence spans 274 residues: 1D-myo-inositol 2-acetamido-2-deoxy-alpha-D-glucopyranoside deacetylase 2 (274 aa).

Zn(2+)-binding residues include His-6, Asp-9, and His-140.

It belongs to the MshB deacetylase family. Zn(2+) is required as a cofactor.

It catalyses the reaction 1D-myo-inositol 2-acetamido-2-deoxy-alpha-D-glucopyranoside + H2O = 1D-myo-inositol 2-amino-2-deoxy-alpha-D-glucopyranoside + acetate. In terms of biological role, catalyzes the deacetylation of 1D-myo-inositol 2-acetamido-2-deoxy-alpha-D-glucopyranoside (GlcNAc-Ins) in the mycothiol biosynthesis pathway. In Saccharopolyspora erythraea (strain ATCC 11635 / DSM 40517 / JCM 4748 / NBRC 13426 / NCIMB 8594 / NRRL 2338), this protein is 1D-myo-inositol 2-acetamido-2-deoxy-alpha-D-glucopyranoside deacetylase 2.